The sequence spans 512 residues: Cytochrome P450 monooxygenase pbrB (512 aa).

Residues 6–29 form a helical membrane-spanning segment; that stretch reads LSFPAAVGAAFGAFAIYVVARCIY. Residue Cys-452 participates in heme binding.

It belongs to the cytochrome P450 family. The cofactor is heme.

The protein localises to the membrane. The protein operates within secondary metabolite biosynthesis; terpenoid biosynthesis. Its function is as follows. Cytochrome P450 monooxygenase; part of the gene cluster that mediates the biosynthesis of the sesquiterpenoid aspterric acid (AA), an inhibitor of dihydroxy-acid dehydratase (DHAD) effective as an herbicide. PbrB catalyzes the second step within the pathway and converts (-)-daucane produced by the terpene cyclase pbrA into an alpha-epoxy carboxylate intermediate which is further converted into the tricyclic aspterric acid by the cytochrome P450 monooxygenase pbrC. In Penicillium brasilianum, this protein is Cytochrome P450 monooxygenase pbrB.